A 274-amino-acid chain; its full sequence is uncharacterized protein (274 aa).

Positions 1-19 (MKRINKVLLSLLCLVIAYA) are cleaved as a signal peptide.

This is an uncharacterized protein from Rickettsia prowazekii (strain Madrid E).